A 119-amino-acid chain; its full sequence is Phosphoribosyl-AMP cyclohydrolase (119 aa).

D77 lines the Mg(2+) pocket. C78 provides a ligand contact to Zn(2+). D79 and D81 together coordinate Mg(2+). Residues C94 and C101 each coordinate Zn(2+).

Belongs to the PRA-CH family. Homodimer. Requires Mg(2+) as cofactor. Zn(2+) serves as cofactor.

Its subcellular location is the cytoplasm. It catalyses the reaction 1-(5-phospho-beta-D-ribosyl)-5'-AMP + H2O = 1-(5-phospho-beta-D-ribosyl)-5-[(5-phospho-beta-D-ribosylamino)methylideneamino]imidazole-4-carboxamide. The protein operates within amino-acid biosynthesis; L-histidine biosynthesis; L-histidine from 5-phospho-alpha-D-ribose 1-diphosphate: step 3/9. Functionally, catalyzes the hydrolysis of the adenine ring of phosphoribosyl-AMP. This chain is Phosphoribosyl-AMP cyclohydrolase, found in Cereibacter sphaeroides (strain ATCC 17029 / ATH 2.4.9) (Rhodobacter sphaeroides).